Here is a 250-residue protein sequence, read N- to C-terminus: Ureidoacrylate amidohydrolase RutB (250 aa).

The Proton acceptor role is filled by Asp44. Residue Lys153 is part of the active site. Cys186 serves as the catalytic Nucleophile.

Belongs to the isochorismatase family. RutB subfamily.

It carries out the reaction (Z)-3-ureidoacrylate + H2O + H(+) = (Z)-3-aminoacrylate + NH4(+) + CO2. It catalyses the reaction (Z)-3-ureidoacrylate + H2O = (Z)-3-aminoacrylate + carbamate + H(+). The catalysed reaction is (Z)-2-methylureidoacrylate + H2O + H(+) = (Z)-2-methylaminoacrylate + NH4(+) + CO2. Hydrolyzes ureidoacrylate to form aminoacrylate and carbamate. The carbamate hydrolyzes spontaneously, thereby releasing one of the nitrogen atoms of the pyrimidine ring as ammonia and one of its carbon atoms as CO2. The chain is Ureidoacrylate amidohydrolase RutB from Pantoea ananatis (strain LMG 20103).